The chain runs to 101 residues: Small ribosomal subunit protein uS14 (101 aa).

It belongs to the universal ribosomal protein uS14 family. Part of the 30S ribosomal subunit. Contacts proteins S3 and S10.

Binds 16S rRNA, required for the assembly of 30S particles and may also be responsible for determining the conformation of the 16S rRNA at the A site. The sequence is that of Small ribosomal subunit protein uS14 from Shewanella denitrificans (strain OS217 / ATCC BAA-1090 / DSM 15013).